A 65-amino-acid polypeptide reads, in one-letter code: Large ribosomal subunit protein bL35 (65 aa).

This sequence belongs to the bacterial ribosomal protein bL35 family.

This chain is Large ribosomal subunit protein bL35, found in Prochlorococcus marinus (strain NATL1A).